A 368-amino-acid polypeptide reads, in one-letter code: tRNA(Met) cytidine acetate ligase (368 aa).

ATP is bound by residues 7 to 20 (IAEF…HKYL), glycine 96, asparagine 152, and arginine 175.

The protein belongs to the TmcAL family.

It is found in the cytoplasm. The catalysed reaction is cytidine(34) in elongator tRNA(Met) + acetate + ATP = N(4)-acetylcytidine(34) in elongator tRNA(Met) + AMP + diphosphate. Catalyzes the formation of N(4)-acetylcytidine (ac(4)C) at the wobble position of elongator tRNA(Met), using acetate and ATP as substrates. First activates an acetate ion to form acetyladenylate (Ac-AMP) and then transfers the acetyl group to tRNA to form ac(4)C34. This is tRNA(Met) cytidine acetate ligase from Streptococcus pyogenes serotype M5 (strain Manfredo).